Reading from the N-terminus, the 252-residue chain is MPPAKMSIRDLNFYYGDFQALKNINIDIPDKKVTAFIGPSGCGKSTLLRTFNRMYDLYPGMRAEGNINLDGKNILGKDIDVNLLRAQVGMVFQKPTPFPMSIYDNVAFGVRLYEKLSKAEMDNRVEWALKKAALWLEVKDKLRASGLSLSGGQQQRLCIARGVATKPEVLLLDEPTSALDPISTGAIEELITDLKNDYTIAIVTHNMQQAARVSDYTAYMYLGDMVEMGETDQIFTNPAQKATEDYITGRYG.

The 242-residue stretch at 6 to 247 folds into the ABC transporter domain; the sequence is MSIRDLNFYY…PAQKATEDYI (242 aa). 38–45 is an ATP binding site; that stretch reads GPSGCGKS.

This sequence belongs to the ABC transporter superfamily. Phosphate importer (TC 3.A.1.7) family. As to quaternary structure, the complex is composed of two ATP-binding proteins (PstB), two transmembrane proteins (PstC and PstA) and a solute-binding protein (PstS).

The protein resides in the cell inner membrane. The catalysed reaction is phosphate(out) + ATP + H2O = ADP + 2 phosphate(in) + H(+). In terms of biological role, part of the ABC transporter complex PstSACB involved in phosphate import. Responsible for energy coupling to the transport system. This is Phosphate import ATP-binding protein PstB from Psychrobacter cryohalolentis (strain ATCC BAA-1226 / DSM 17306 / VKM B-2378 / K5).